We begin with the raw amino-acid sequence, 448 residues long: Adenylosuccinate synthetase (448 aa).

Residues glycine 22 to lysine 28 and glycine 50 to threonine 52 contribute to the GTP site. Aspartate 23 serves as the catalytic Proton acceptor. Mg(2+)-binding residues include aspartate 23 and glycine 50. IMP-binding positions include aspartate 23–lysine 26, asparagine 48–histidine 51, threonine 139, arginine 153, glutamine 234, threonine 249, and arginine 321. Residue histidine 51 is the Proton donor of the active site. Serine 317–arginine 323 provides a ligand contact to substrate. Residues arginine 323, lysine 349 to aspartate 351, and serine 431 to glycine 433 each bind GTP.

Belongs to the adenylosuccinate synthetase family. As to quaternary structure, homodimer. The cofactor is Mg(2+).

It localises to the cytoplasm. It carries out the reaction IMP + L-aspartate + GTP = N(6)-(1,2-dicarboxyethyl)-AMP + GDP + phosphate + 2 H(+). It participates in purine metabolism; AMP biosynthesis via de novo pathway; AMP from IMP: step 1/2. Its function is as follows. Plays an important role in the de novo pathway of purine nucleotide biosynthesis. Catalyzes the first committed step in the biosynthesis of AMP from IMP. This chain is Adenylosuccinate synthetase, found in Burkholderia pseudomallei (strain 1106a).